Reading from the N-terminus, the 487-residue chain is ATP-dependent RNA helicase DBP3 (487 aa).

A disordered region spans residues 1-40 (MAKRSRNMESNSERSSRPKKKSKGDAKPEQPPYVQSAELD). Positions 71–98 (TAFSYLPSDSNQLYGPLEHFSKPTPIQS) match the Q motif motif. One can recognise a Helicase ATP-binding domain in the interval 101–276 (WPYLFAGRDV…TTFMKEPVTV (176 aa)). 114–121 (AETGSGKT) contacts ATP. Residues 222–225 (DEAD) carry the DEAD box motif. In terms of domain architecture, Helicase C-terminal spans 291 to 456 (RIKQIVEVVK…DIPEALLKFG (166 aa)).

Belongs to the DEAD box helicase family. DDX5/DBP2 subfamily.

Its subcellular location is the nucleus. The protein resides in the nucleolus. It carries out the reaction ATP + H2O = ADP + phosphate + H(+). ATP-dependent RNA helicase required for 60S ribosomal subunit synthesis. Involved in efficient pre-rRNA processing, predominantly at site A3, which is necessary for the normal formation of 25S and 5.8S rRNAs. This Ajellomyces capsulatus (strain NAm1 / WU24) (Darling's disease fungus) protein is ATP-dependent RNA helicase DBP3 (DBP3).